A 299-amino-acid polypeptide reads, in one-letter code: ATP phosphoribosyltransferase (299 aa).

Belongs to the ATP phosphoribosyltransferase family. Long subfamily. Requires Mg(2+) as cofactor.

The protein localises to the cytoplasm. It catalyses the reaction 1-(5-phospho-beta-D-ribosyl)-ATP + diphosphate = 5-phospho-alpha-D-ribose 1-diphosphate + ATP. It participates in amino-acid biosynthesis; L-histidine biosynthesis; L-histidine from 5-phospho-alpha-D-ribose 1-diphosphate: step 1/9. Feedback inhibited by histidine. Its function is as follows. Catalyzes the condensation of ATP and 5-phosphoribose 1-diphosphate to form N'-(5'-phosphoribosyl)-ATP (PR-ATP). Has a crucial role in the pathway because the rate of histidine biosynthesis seems to be controlled primarily by regulation of HisG enzymatic activity. The sequence is that of ATP phosphoribosyltransferase from Campylobacter jejuni subsp. doylei (strain ATCC BAA-1458 / RM4099 / 269.97).